Consider the following 136-residue polypeptide: Large ribosomal subunit protein uL16 (136 aa).

Belongs to the universal ribosomal protein uL16 family. In terms of assembly, part of the 50S ribosomal subunit.

Its function is as follows. Binds 23S rRNA and is also seen to make contacts with the A and possibly P site tRNAs. This Ehrlichia canis (strain Jake) protein is Large ribosomal subunit protein uL16.